A 154-amino-acid chain; its full sequence is Interleukin-2 (154 aa).

A signal peptide spans 1–20 (MYKIQLLSCIALTLILVTNS). A disulfide bridge links cysteine 78 with cysteine 126. N-linked (GlcNAc...) asparagine glycosylation is present at asparagine 111.

This sequence belongs to the IL-2 family.

The protein localises to the secreted. Functionally, cytokine produced by activated CD4-positive helper T-cells and to a lesser extend activated CD8-positive T-cells and natural killer (NK) cells that plays pivotal roles in the immune response and tolerance. Binds to a receptor complex composed of either the high-affinity trimeric IL-2R (IL2RA/CD25, IL2RB/CD122 and IL2RG/CD132) or the low-affinity dimeric IL-2R (IL2RB and IL2RG). Interaction with the receptor leads to oligomerization and conformation changes in the IL-2R subunits resulting in downstream signaling starting with phosphorylation of JAK1 and JAK3. In turn, JAK1 and JAK3 phosphorylate the receptor to form a docking site leading to the phosphorylation of several substrates including STAT5. This process leads to activation of several pathways including STAT, phosphoinositide-3-kinase/PI3K and mitogen-activated protein kinase/MAPK pathways. Functions as a T-cell growth factor and can increase NK-cell cytolytic activity as well. Promotes strong proliferation of activated B-cells and subsequently immunoglobulin production. Plays a pivotal role in regulating the adaptive immune system by controlling the survival and proliferation of regulatory T-cells, which are required for the maintenance of immune tolerance. Moreover, participates in the differentiation and homeostasis of effector T-cell subsets, including Th1, Th2, Th17 as well as memory CD8-positive T-cells. This chain is Interleukin-2 (IL2), found in Felis catus (Cat).